The chain runs to 308 residues: MIEFSHVSKLFGAQKAVNDLNLNFQEGSFSVLIGTSGSGKSTTLKMINRLVEHDSGEIRFAGEEIRSLPVLELRRRMGYAIQSIGLFPHWSVAQNIATVPQLQKWSRARIDDRIDELMALLGLESNLRERYPHQLSGGQQQRVGVARALAADPQVLLMDEPFGALDPVTRGALQQEMTRIHRLLGRTIVLVTHDIDEALRLAEHLVLMDHGEVVQQGNPLTMLTRPANDFVRQFFGRSELGVRLLSLRSVADYVRREERADGEALAEEMTLRDALSLFVARGCEVLPVVNMQGQPCGTLHFQDLLVEA.

Residues 2–235 form the ABC transporter domain; the sequence is IEFSHVSKLF…PANDFVRQFF (234 aa). Position 34-41 (34-41) interacts with ATP; the sequence is GTSGSGKS.

This sequence belongs to the ABC transporter superfamily. The complex is composed of two ATP-binding proteins (YehX), two transmembrane proteins (YehW and YehY) and a solute-binding protein (YehZ).

It carries out the reaction glycine betaine(out) + ATP + H2O = glycine betaine(in) + ADP + phosphate + H(+). Its function is as follows. Part of an ABC transporter complex involved in low-affinity glycine betaine uptake. Probably responsible for energy coupling to the transport system. In Escherichia coli (strain K12), this protein is Glycine betaine uptake system ATP-binding protein YehX (yehX).